Reading from the N-terminus, the 523-residue chain is 2-isopropylmalate synthase (523 aa).

Positions 5–267 (VIIFDTTLRD…HTNINHHEIW (263 aa)) constitute a Pyruvate carboxyltransferase domain. Residues Asp-14, His-202, His-204, and Asn-238 each contribute to the Mn(2+) site. The interval 392–523 (RLDYFNVQSG…QNKENNKETV (132 aa)) is regulatory domain.

This sequence belongs to the alpha-IPM synthase/homocitrate synthase family. LeuA type 1 subfamily. As to quaternary structure, homodimer. Mn(2+) serves as cofactor.

The protein resides in the cytoplasm. The catalysed reaction is 3-methyl-2-oxobutanoate + acetyl-CoA + H2O = (2S)-2-isopropylmalate + CoA + H(+). It functions in the pathway amino-acid biosynthesis; L-leucine biosynthesis; L-leucine from 3-methyl-2-oxobutanoate: step 1/4. Catalyzes the condensation of the acetyl group of acetyl-CoA with 3-methyl-2-oxobutanoate (2-ketoisovalerate) to form 3-carboxy-3-hydroxy-4-methylpentanoate (2-isopropylmalate). The chain is 2-isopropylmalate synthase from Klebsiella pneumoniae subsp. pneumoniae (strain ATCC 700721 / MGH 78578).